Here is a 183-residue protein sequence, read N- to C-terminus: Tetrahydromethanopterin S-methyltransferase subunit A 2 (183 aa).

Over methionine 1–valine 101 the chain is Cytoplasmic. Residue histidine 87 coordinates 5-hydroxybenzimidazolylcob(I)amide. Residues aspartate 102–isoleucine 118 form a helical membrane-spanning segment. The Extracellular portion of the chain corresponds to glutamate 119–threonine 183.

This sequence belongs to the MtrA family. The complex is composed of 8 subunits; MtrA, MtrB, MtrC, MtrD, MtrE, MtrF, MtrG and MtrH. 5-hydroxybenzimidazolylcob(I)amide serves as cofactor.

Its subcellular location is the cell membrane. It carries out the reaction 5-methyl-5,6,7,8-tetrahydromethanopterin + coenzyme M + 2 Na(+)(in) = 5,6,7,8-tetrahydromethanopterin + methyl-coenzyme M + 2 Na(+)(out). The protein operates within one-carbon metabolism; methanogenesis from CO(2); methyl-coenzyme M from 5,10-methylene-5,6,7,8-tetrahydromethanopterin: step 2/2. In terms of biological role, part of a complex that catalyzes the formation of methyl-coenzyme M and tetrahydromethanopterin from coenzyme M and methyl-tetrahydromethanopterin. This is an energy-conserving, sodium-ion translocating step. This is Tetrahydromethanopterin S-methyltransferase subunit A 2 from Methanothermobacter thermautotrophicus (strain ATCC 29096 / DSM 1053 / JCM 10044 / NBRC 100330 / Delta H) (Methanobacterium thermoautotrophicum).